Reading from the N-terminus, the 231-residue chain is MSAAVVATLPTLLLLLGLAAADCPSSSWVQFQSNCYIFLQTTVKIENIEDVRNQCTDSASGADMISIHNEEENAFILETFKKRWKAQDDILLGMFYDTDDESFKWYDKSNMTFNKWKNSEESQDLIDTCGFLQPKSGIWKKGNCEVSSVEGALCKAAVSYEKKYLPDHHILITALVIASTTILTITGAVVWFLYKRNLTSGLTNTAYTTAPQLPYNDDCILVDAEENEYVA.

A signal peptide spans 1-21; sequence MSAAVVATLPTLLLLLGLAAA. The Extracellular portion of the chain corresponds to 22–169; it reads DCPSSSWVQF…YEKKYLPDHH (148 aa). One can recognise a C-type lectin domain in the interval 31–153; sequence FQSNCYIFLQ…CEVSSVEGAL (123 aa). Asparagine 110 carries an N-linked (GlcNAc...) asparagine glycan. Cysteine 129 and cysteine 144 are joined by a disulfide. A helical membrane pass occupies residues 170–190; sequence ILITALVIASTTILTITGAVV. Residues 191–231 lie on the Cytoplasmic side of the membrane; that stretch reads WFLYKRNLTSGLTNTAYTTAPQLPYNDDCILVDAEENEYVA.

It is found in the membrane. Its subcellular location is the cell projection. The protein resides in the filopodium. The protein localises to the cytoplasm. It localises to the cell cortex. It is found in the microvillus. Potential multifunctional C-type lectin receptor that may play roles in endocytosis and phagocytosis as well as in cell adhesion and migration. The chain is CD302 antigen from Trichosurus vulpecula (Brush-tailed possum).